The primary structure comprises 194 residues: NADH-quinone oxidoreductase subunit B 1 (194 aa).

Positions 73, 74, 138, and 168 each coordinate [4Fe-4S] cluster.

This sequence belongs to the complex I 20 kDa subunit family. NDH-1 is composed of 14 different subunits. Subunits NuoB, C, D, E, F, and G constitute the peripheral sector of the complex. It depends on [4Fe-4S] cluster as a cofactor.

The protein localises to the cell inner membrane. The catalysed reaction is a quinone + NADH + 5 H(+)(in) = a quinol + NAD(+) + 4 H(+)(out). NDH-1 shuttles electrons from NADH, via FMN and iron-sulfur (Fe-S) centers, to quinones in the respiratory chain. The immediate electron acceptor for the enzyme in this species is believed to be ubiquinone. Couples the redox reaction to proton translocation (for every two electrons transferred, four hydrogen ions are translocated across the cytoplasmic membrane), and thus conserves the redox energy in a proton gradient. This is NADH-quinone oxidoreductase subunit B 1 from Rhizobium etli (strain CIAT 652).